A 516-amino-acid polypeptide reads, in one-letter code: Cysteine--tRNA ligase (516 aa).

Cys-34 provides a ligand contact to Zn(2+). The 'HIGH' region motif lies at 36–46 (PTVYNFAHLGN). Zn(2+) is bound by residues Cys-225, His-250, and Glu-254. Residues 285–289 (KMSKS) carry the 'KMSKS' region motif. Residue Lys-288 participates in ATP binding.

This sequence belongs to the class-I aminoacyl-tRNA synthetase family. As to quaternary structure, monomer. Zn(2+) is required as a cofactor.

It localises to the cytoplasm. The enzyme catalyses tRNA(Cys) + L-cysteine + ATP = L-cysteinyl-tRNA(Cys) + AMP + diphosphate. This Zymomonas mobilis subsp. mobilis (strain ATCC 31821 / ZM4 / CP4) protein is Cysteine--tRNA ligase.